The primary structure comprises 762 residues: 5-methyltetrahydropteroyltriglutamate--homocysteine methyltransferase (762 aa).

5-methyltetrahydropteroyltri-L-glutamate contacts are provided by residues Arg17 to Lys20 and Lys111. L-homocysteine is bound by residues Ile435–Ser437 and Glu488. L-methionine is bound by residues Ile435 to Ser437 and Glu488. 5-methyltetrahydropteroyltri-L-glutamate contacts are provided by residues Arg519–Cys520 and Trp565. Asp603 is a binding site for L-homocysteine. Asp603 is an L-methionine binding site. Glu609 serves as a coordination point for 5-methyltetrahydropteroyltri-L-glutamate. Zn(2+) is bound by residues His645, Cys647, and Glu669. His698 serves as the catalytic Proton donor. Residue Cys730 coordinates Zn(2+).

The protein belongs to the vitamin-B12 independent methionine synthase family. Requires Zn(2+) as cofactor.

It catalyses the reaction 5-methyltetrahydropteroyltri-L-glutamate + L-homocysteine = tetrahydropteroyltri-L-glutamate + L-methionine. The protein operates within amino-acid biosynthesis; L-methionine biosynthesis via de novo pathway; L-methionine from L-homocysteine (MetE route): step 1/1. Functionally, catalyzes the transfer of a methyl group from 5-methyltetrahydrofolate to homocysteine resulting in methionine formation. The chain is 5-methyltetrahydropteroyltriglutamate--homocysteine methyltransferase from Bacillus cereus (strain AH187).